The following is a 362-amino-acid chain: Outer envelope protein 39, chloroplastic (362 aa).

Belongs to the OEP80 (TC 1.B.33.2) family. As to expression, expressed in germinating seeds. Expressed in the vasculature of roots, cotyledons and leaves.

It is found in the plastid. The protein resides in the chloroplast outer membrane. In terms of biological role, beta-barrel pore-forming protein which possesses voltage-dependent channel activity. Required for proper plastid development. Involved in the maintenance of metabolic homeostasis of full-grown plants. The sequence is that of Outer envelope protein 39, chloroplastic from Arabidopsis thaliana (Mouse-ear cress).